Reading from the N-terminus, the 336-residue chain is MNHQIHIHDSDIAFPCAPGQSVLDAALQAGIELPYSCRKGSCGNCASALLDGNITSFNGMAVRSELCTSEQVLLCGCTAASDIRIQPSSFRRLDPEARKRFTAKVYSNTLAAPDVSLLRLRLPVGKRAKFEAGQYLLIHLDDGESRSYSMANPPHESDGITLHVRHVPGGRFSTIVQQLKSGDTLEIELPFGSIALKPDDTRPLICVAGGTGFAPIKSVLDDLAKRKVQRDITLIWGARNPSGLYLPSAIDKWRKTWPQFRYIAAITDLGNVPADAHAGRVDDALRTHFGNLHDHVVHCCGSPSLVQSVRTAASDMGLLAQNFHADVFATSPTGSH.

Residues 3–91 (HQIHIHDSDI…DIRIQPSSFR (89 aa)) enclose the 2Fe-2S ferredoxin-type domain. Positions 37, 42, 45, and 75 each coordinate [2Fe-2S] cluster. Residues 98-197 (RKRFTAKVYS…ELPFGSIALK (100 aa)) enclose the FAD-binding FR-type domain.

In terms of assembly, monomer. Part of a multicomponent enzyme system composed of a reductase (TphA1I or TphA1II) and a two-subunit oxygenase component (TphA2I or TphA2II and TphA3I or TphA3II). The cofactor is FAD. [2Fe-2S] cluster is required as a cofactor.

It carries out the reaction terephthalate + NADH + O2 + H(+) = (3S,4R)-3,4-dihydroxycyclohexa-1,5-diene-1,4-dicarboxylate + NAD(+). Functionally, component of the terephthalate 1,2-dioxygenase multicomponent enzyme system which catalyzes the dioxygenation of terephthalate (TER/TPA) to 1,2-dihydroxy-3,5-cyclohexadiene-1,4-dicarboxylic acid (DCD). TphA1 probably reduces TphA2A3. It can also use 2,5-dicarboxypyridine (PDC) and 1,4-napthalenedicarboxylic acid (NDC) as substrates, and preferentially uses NADPH which is the physiological electron donor. The sequence is that of Terephthalate 1,2-dioxygenase, reductase component 1 (tphA1I) from Comamonas sp.